We begin with the raw amino-acid sequence, 109 residues long: Nucleoid-associated protein A1S_1684 (109 aa).

It belongs to the YbaB/EbfC family. Homodimer.

The protein localises to the cytoplasm. It localises to the nucleoid. Binds to DNA and alters its conformation. May be involved in regulation of gene expression, nucleoid organization and DNA protection. The polypeptide is Nucleoid-associated protein A1S_1684 (Acinetobacter baumannii (strain ATCC 17978 / DSM 105126 / CIP 53.77 / LMG 1025 / NCDC KC755 / 5377)).